The following is a 146-amino-acid chain: MTSERSRIPCLSAAAAEGTGKKQQEGTAMATLHRKVPSPEAFLGKPWSSWIDAAKLHCSDNVDLEEAGKEGGKSREVMRLNKEDMHLFGHYPAHDDFYLVVCSACNQVVKPQVFQSHCGRKQDSKRNASISWSGAESRQALEQRQV.

Disordered regions lie at residues 1–27 (MTSERSRIPCLSAAAAEGTGKKQQEGT) and 125–146 (KRNASISWSGAESRQALEQRQV). A compositionally biased stretch (polar residues) spans 127-138 (NASISWSGAESR).

This is Ataxin-7-like protein 1 (Atxn7l1) from Mus musculus (Mouse).